Reading from the N-terminus, the 339-residue chain is Carboxyvinyl-carboxyphosphonate phosphorylmutase, chloroplastic (339 aa).

The transit peptide at 1 to 30 (MSMLMAVKTTSLCCSSLNLTASPTFRRNPR) directs the protein to the chloroplast.

The protein belongs to the isocitrate lyase/PEP mutase superfamily.

It localises to the plastid. Its subcellular location is the chloroplast. It catalyses the reaction 1-carboxyvinyl carboxyphosphonate + H(+) = 3-(hydrohydroxyphosphoryl)pyruvate + CO2. In Arabidopsis thaliana (Mouse-ear cress), this protein is Carboxyvinyl-carboxyphosphonate phosphorylmutase, chloroplastic.